A 269-amino-acid chain; its full sequence is Sushi domain-containing protein 3 (269 aa).

The interval 1–23 (MRRTSATLRGRARPRWRAGNTTP) is disordered. Residues 1–103 (MRRTSATLRG…VPPHETFGFK (103 aa)) lie on the Extracellular side of the membrane. Residues 30 to 93 (GTCAQLHPPP…WSSGSPVCKA (64 aa)) enclose the Sushi domain. 2 cysteine pairs are disulfide-bonded: Cys-32–Cys-75 and Cys-61–Cys-91. Residues 104–124 (VAVIASIVSCAIILLMSMAFL) form a helical membrane-spanning segment. The Cytoplasmic segment spans residues 125–269 (TCCLLKCVQK…PGRPKVYLPG (145 aa)). A disordered region spans residues 171–237 (NNSSSVGGGN…RMGTPGPGGC (67 aa)). Over residues 176–190 (VGGGNGGPSGGGGKP) the composition is skewed to gly residues.

It is found in the cell membrane. In Mus musculus (Mouse), this protein is Sushi domain-containing protein 3 (Susd3).